The sequence spans 423 residues: CinA-like protein (423 aa).

The protein belongs to the CinA family.

The sequence is that of CinA-like protein from Desulforapulum autotrophicum (strain ATCC 43914 / DSM 3382 / VKM B-1955 / HRM2) (Desulfobacterium autotrophicum).